The chain runs to 281 residues: Ribosomal RNA small subunit methyltransferase J (281 aa).

S-adenosyl-L-methionine-binding positions include Arg129–Asp130, Glu145–Arg146, and Asp199.

It belongs to the methyltransferase superfamily. RsmJ family.

It localises to the cytoplasm. The enzyme catalyses guanosine(1516) in 16S rRNA + S-adenosyl-L-methionine = N(2)-methylguanosine(1516) in 16S rRNA + S-adenosyl-L-homocysteine + H(+). Functionally, specifically methylates the guanosine in position 1516 of 16S rRNA. The sequence is that of Ribosomal RNA small subunit methyltransferase J from Laribacter hongkongensis (strain HLHK9).